A 220-amino-acid polypeptide reads, in one-letter code: UPF0758 protein ASA_4229 (220 aa).

The MPN domain maps to 95–220 (EQLQRGDALT…TVSFAERGWL (126 aa)). Residues His-169, His-171, and Asp-182 each contribute to the Zn(2+) site. The JAMM motif signature appears at 169–182 (HNHPSGVAEPSRAD).

The protein belongs to the UPF0758 family.

In Aeromonas salmonicida (strain A449), this protein is UPF0758 protein ASA_4229.